The sequence spans 191 residues: Adenine phosphoribosyltransferase (191 aa).

The protein belongs to the purine/pyrimidine phosphoribosyltransferase family. Homodimer.

Its subcellular location is the cytoplasm. It catalyses the reaction AMP + diphosphate = 5-phospho-alpha-D-ribose 1-diphosphate + adenine. It participates in purine metabolism; AMP biosynthesis via salvage pathway; AMP from adenine: step 1/1. Its function is as follows. Catalyzes a salvage reaction resulting in the formation of AMP, that is energically less costly than de novo synthesis. The polypeptide is Adenine phosphoribosyltransferase (Nocardia farcinica (strain IFM 10152)).